Here is a 255-residue protein sequence, read N- to C-terminus: Type III pantothenate kinase (255 aa).

6-13 (DVGNTNTV) provides a ligand contact to ATP. Residue 108 to 111 (GADR) coordinates substrate. The active-site Proton acceptor is the Asp-110. Asp-130 is a K(+) binding site. Thr-133 contributes to the ATP binding site. Residue Thr-185 coordinates substrate.

The protein belongs to the type III pantothenate kinase family. As to quaternary structure, homodimer. The cofactor is NH4(+). K(+) is required as a cofactor.

The protein resides in the cytoplasm. It catalyses the reaction (R)-pantothenate + ATP = (R)-4'-phosphopantothenate + ADP + H(+). It participates in cofactor biosynthesis; coenzyme A biosynthesis; CoA from (R)-pantothenate: step 1/5. Its function is as follows. Catalyzes the phosphorylation of pantothenate (Pan), the first step in CoA biosynthesis. The protein is Type III pantothenate kinase of Hyphomonas neptunium (strain ATCC 15444).